Here is a 42-residue protein sequence, read N- to C-terminus: Proline-rich antimicrobial peptide 2 (42 aa).

Hemolymph.

It is found in the secreted. Its function is as follows. Antimicrobial protein. Has antibacterial activity against the Gram-positive bacterium M.luteus (MIC=8.6 uM). Lacks antibacterial activity against the Gram-positive bacteria B.circulans, L.monocytogenes, S.aureus, and S.lutea, and the Gram-negative bacteria E.coli D31, E.coli ATCC 25922, and S.typhimurium. Lacks antifungal activity against S.cerevisiae, P.pastoris, Z.marxianus, C.albicans, C.fructus, C.wickerhamii, A.niger, F.oxysporum, and T.harizianum. The chain is Proline-rich antimicrobial peptide 2 from Galleria mellonella (Greater wax moth).